Consider the following 325-residue polypeptide: Natural cytotoxicity triggering receptor 1 (325 aa).

The signal sequence occupies residues 1–16 (MLPTLTALLCLGLCLS). At 17–258 (QRINTEKQTL…WDHTAQNLIR (242 aa)) the chain is on the extracellular side. Ig-like domains are found at residues 42–100 (GNSV…TCFY) and 137–192 (GENV…RCFG). The cysteines at positions 49 and 98 are disulfide-linked. N-linked (GlcNAc...) asparagine glycosylation occurs at Asn139. A disulfide bridge links Cys144 with Cys190. An N-linked (GlcNAc...) asparagine glycan is attached at Asn216. The helical transmembrane segment at 259-279 (IGLACIIVMALVWLLAEDWLS) threads the bilayer. At 280–325 (RRKDHEKLNRLTSWECRGRRRMHRYHEEEQRDAISMRELKATPGDM) the chain is on the cytoplasmic side.

This sequence belongs to the natural cytotoxicity receptor (NCR) family. Interacts with CD3Z and FCER1G. Weakly expressed in spleen, heart and lung.

The protein localises to the cell membrane. Functionally, cytotoxicity-activating receptor that may contribute to the increased efficiency of activated natural killer (NK) cells to mediate tumor cell lysis. This is Natural cytotoxicity triggering receptor 1 (Ncr1) from Rattus norvegicus (Rat).